A 293-amino-acid chain; its full sequence is Ribosomal protein L11 methyltransferase (293 aa).

S-adenosyl-L-methionine contacts are provided by Thr-145, Gly-166, Asp-188, and Asn-230.

It belongs to the methyltransferase superfamily. PrmA family.

Its subcellular location is the cytoplasm. It carries out the reaction L-lysyl-[protein] + 3 S-adenosyl-L-methionine = N(6),N(6),N(6)-trimethyl-L-lysyl-[protein] + 3 S-adenosyl-L-homocysteine + 3 H(+). Its function is as follows. Methylates ribosomal protein L11. The protein is Ribosomal protein L11 methyltransferase of Shewanella woodyi (strain ATCC 51908 / MS32).